The sequence spans 364 residues: DNA replication and repair protein RecF (364 aa).

30-37 provides a ligand contact to ATP; it reads GKNAQGKT.

The protein belongs to the RecF family.

The protein resides in the cytoplasm. In terms of biological role, the RecF protein is involved in DNA metabolism; it is required for DNA replication and normal SOS inducibility. RecF binds preferentially to single-stranded, linear DNA. It also seems to bind ATP. In Geotalea uraniireducens (strain Rf4) (Geobacter uraniireducens), this protein is DNA replication and repair protein RecF.